The chain runs to 157 residues: Ribosome maturation factor RimP (157 aa).

This sequence belongs to the RimP family.

Its subcellular location is the cytoplasm. In terms of biological role, required for maturation of 30S ribosomal subunits. The chain is Ribosome maturation factor RimP from Petrotoga mobilis (strain DSM 10674 / SJ95).